We begin with the raw amino-acid sequence, 45 residues long: Large ribosomal subunit protein bL34c (45 aa).

The tract at residues 1–21 (MIQRTLTGTNRKKTKRSGFRS) is disordered. Positions 10–19 (NRKKTKRSGF) are enriched in basic residues.

This sequence belongs to the bacterial ribosomal protein bL34 family.

The protein localises to the plastid. The protein resides in the chloroplast. This is Large ribosomal subunit protein bL34c (rpl34) from Cyanidium caldarium (Red alga).